Reading from the N-terminus, the 82-residue chain is Small ribosomal subunit protein bS16 (82 aa).

It belongs to the bacterial ribosomal protein bS16 family.

In Cyanothece sp. (strain PCC 7425 / ATCC 29141), this protein is Small ribosomal subunit protein bS16.